A 391-amino-acid polypeptide reads, in one-letter code: Aspartic protease 17 (391 aa).

The first 15 residues, 1 to 15 (MHLIFLLFLAPFCSA), serve as a signal peptide directing secretion. The 321-residue stretch at 65-385 (YLGNFTVGTP…DIGNARIGFA (321 aa)) folds into the Peptidase A1 domain. N-linked (GlcNAc...) asparagine glycosylation occurs at asparagine 68. The active site involves aspartate 83. An N-linked (GlcNAc...) asparagine glycan is attached at asparagine 108. The active site involves aspartate 274. A disulfide bond links cysteine 309 and cysteine 345.

The protein belongs to the peptidase A1 family. As to expression, expressed in intestinal cells.

It is found in the secreted. In terms of biological role, aspartic proteinase. The chain is Aspartic protease 17 from Caenorhabditis elegans.